A 1433-amino-acid chain; its full sequence is Probable serine/threonine-protein kinase DDB_G0277989 (1433 aa).

Residues 1–4 (MNEI) and K41 contribute to the ATP site. The Protein kinase 1 domain occupies 1 to 272 (MNEIIVGEYK…EFDDFTHPLS (272 aa)). D151 serves as the catalytic Proton acceptor. 2 stretches are compositionally biased toward low complexity: residues 332-362 (NNNN…NNNN) and 533-550 (TATT…TTTA). Disordered regions lie at residues 332–366 (NNNN…SDGP) and 521–550 (PSSE…TTTA). Residues 1177 to 1433 (IYDKRYYIQK…QPHVCKSFKK (257 aa)) form the Protein kinase 2 domain.

It belongs to the protein kinase superfamily. Ser/Thr protein kinase family.

The catalysed reaction is L-seryl-[protein] + ATP = O-phospho-L-seryl-[protein] + ADP + H(+). It catalyses the reaction L-threonyl-[protein] + ATP = O-phospho-L-threonyl-[protein] + ADP + H(+). The protein is Probable serine/threonine-protein kinase DDB_G0277989 of Dictyostelium discoideum (Social amoeba).